A 35-amino-acid chain; its full sequence is Photosystem II reaction center protein Psb30 (35 aa).

The chain crosses the membrane as a helical span at residues 7–27 (LIANFGALALITLAGPAVIFI).

It belongs to the Psb30/Ycf12 family. In terms of assembly, PSII is composed of 1 copy each of membrane proteins PsbA, PsbB, PsbC, PsbD, PsbE, PsbF, PsbH, PsbI, PsbJ, PsbK, PsbL, PsbM, PsbT, PsbX, PsbY, PsbZ, Psb30/Ycf12, peripheral proteins PsbO, CyanoQ (PsbQ), PsbU, PsbV and a large number of cofactors. It forms dimeric complexes.

Its subcellular location is the cellular thylakoid membrane. Functionally, a core subunit of photosystem II (PSII), probably helps stabilize the reaction center. The polypeptide is Photosystem II reaction center protein Psb30 (Synechococcus sp. (strain CC9311)).